A 78-amino-acid chain; its full sequence is Large ribosomal subunit protein bL28 (78 aa).

Positions 1-20 are disordered; sequence MSRVCQVTGKRPAVGNNRSH.

The protein belongs to the bacterial ribosomal protein bL28 family.

The protein is Large ribosomal subunit protein bL28 of Actinobacillus pleuropneumoniae serotype 7 (strain AP76).